An 824-amino-acid polypeptide reads, in one-letter code: uncharacterized protein (824 aa).

This is an uncharacterized protein from Caenorhabditis elegans.